A 615-amino-acid chain; its full sequence is Protein DBF4 homolog B (615 aa).

A BRCT domain is found at 43–133; sequence ARKHPFSGKS…DPKGSHPRPS (91 aa). Disordered stretches follow at residues 93 to 141 and 264 to 293; these read REVK…DSVP and FEAPTTLGSMHHTRESKDGEPSPRSAAHTM. Basic and acidic residues predominate over residues 275-284; it reads HTRESKDGEP. Residues 294–343 form a DBF4-type zinc finger; that stretch reads PRRKKGYCECCQEAFEELHVHLQSAQHRSFALEAHLYAEVDRIIAQLSHS. 4 residues coordinate Zn(2+): Cys-301, Cys-304, His-314, and His-320. A disordered region spans residues 371–407; sequence TLHPHQPSHPRAASPRIRKEDSCQASVTQGRAAGQQR.

As to quaternary structure, forms a complex with CDC7. Note that CDC7 forms distinct complex either with DBF4/DBF4A or DBF4B. Such complexes are stable upon replication stress. Post-translationally, phosphorylated. As to expression, widely expressed. Highly expressed in testis.

The protein resides in the nucleus. Its function is as follows. Regulatory subunit for CDC7 which activates its kinase activity thereby playing a central role in DNA replication and cell proliferation. Required for progression of S and M phases. The complex CDC7-DBF4B selectively phosphorylates MCM2 subunit at 'Ser-40' and then is involved in regulating the initiation of DNA replication during cell cycle. The sequence is that of Protein DBF4 homolog B (DBF4B) from Homo sapiens (Human).